The sequence spans 228 residues: L-ribulose-5-phosphate 4-epimerase UlaF (228 aa).

Residues 26-27, 43-44, and 72-73 each bind substrate; these read GN, SG, and SS. Positions 74, 93, and 95 each coordinate Zn(2+). The active-site Proton donor/acceptor is the aspartate 118. Histidine 167 lines the Zn(2+) pocket. Tyrosine 225 functions as the Proton donor/acceptor in the catalytic mechanism.

This sequence belongs to the aldolase class II family. AraD/FucA subfamily. It depends on Zn(2+) as a cofactor.

It catalyses the reaction L-ribulose 5-phosphate = D-xylulose 5-phosphate. It participates in cofactor degradation; L-ascorbate degradation; D-xylulose 5-phosphate from L-ascorbate: step 4/4. Its function is as follows. Catalyzes the isomerization of L-ribulose 5-phosphate to D-xylulose 5-phosphate. Is involved in the anaerobic L-ascorbate utilization. This is L-ribulose-5-phosphate 4-epimerase UlaF from Escherichia coli O8 (strain IAI1).